We begin with the raw amino-acid sequence, 290 residues long: 4-hydroxy-tetrahydrodipicolinate synthase (290 aa).

T44 is a binding site for pyruvate. Y132 (proton donor/acceptor) is an active-site residue. K160 (schiff-base intermediate with substrate) is an active-site residue. I202 provides a ligand contact to pyruvate.

Belongs to the DapA family. As to quaternary structure, homotetramer; dimer of dimers.

The protein resides in the cytoplasm. It catalyses the reaction L-aspartate 4-semialdehyde + pyruvate = (2S,4S)-4-hydroxy-2,3,4,5-tetrahydrodipicolinate + H2O + H(+). Its pathway is amino-acid biosynthesis; L-lysine biosynthesis via DAP pathway; (S)-tetrahydrodipicolinate from L-aspartate: step 3/4. Functionally, catalyzes the condensation of (S)-aspartate-beta-semialdehyde [(S)-ASA] and pyruvate to 4-hydroxy-tetrahydrodipicolinate (HTPA). This Ruegeria pomeroyi (strain ATCC 700808 / DSM 15171 / DSS-3) (Silicibacter pomeroyi) protein is 4-hydroxy-tetrahydrodipicolinate synthase.